The primary structure comprises 308 residues: uncharacterized protein (308 aa).

This is an uncharacterized protein from Escherichia coli (strain K12).